A 520-amino-acid polypeptide reads, in one-letter code: Sterile alpha motif domain-containing protein 3 (520 aa).

The 68-residue stretch at 4–71 (WSVEQVCSWL…KYKQNTQGLK (68 aa)) folds into the SAM domain. Residues 85 to 114 (TEAARDYRDEESSSPARHGEQMPSFYPAEN) are disordered.

The sequence is that of Sterile alpha motif domain-containing protein 3 (SAMD3) from Homo sapiens (Human).